The sequence spans 178 residues: Peptide deformylase 2 (178 aa).

Residues Cys101 and His143 each contribute to the Fe cation site. Glu144 is a catalytic residue. His147 contacts Fe cation.

The protein belongs to the polypeptide deformylase family. Fe(2+) serves as cofactor.

It catalyses the reaction N-terminal N-formyl-L-methionyl-[peptide] + H2O = N-terminal L-methionyl-[peptide] + formate. Functionally, removes the formyl group from the N-terminal Met of newly synthesized proteins. Requires at least a dipeptide for an efficient rate of reaction. N-terminal L-methionine is a prerequisite for activity but the enzyme has broad specificity at other positions. The protein is Peptide deformylase 2 of Pseudomonas putida (strain ATCC 47054 / DSM 6125 / CFBP 8728 / NCIMB 11950 / KT2440).